Here is a 305-residue protein sequence, read N- to C-terminus: GMP synthase [glutamine-hydrolyzing] subunit B (305 aa).

The GMPS ATP-PPase domain occupies 2-184; sequence VDANAFIDEA…LPLPEEISER (183 aa). 29 to 35 is a binding site for ATP; the sequence is SGGVDSS.

As to quaternary structure, heterodimer composed of a glutamine amidotransferase subunit (A) and a GMP-binding subunit (B).

The catalysed reaction is XMP + L-glutamine + ATP + H2O = GMP + L-glutamate + AMP + diphosphate + 2 H(+). The protein operates within purine metabolism; GMP biosynthesis; GMP from XMP (L-Gln route): step 1/1. Functionally, catalyzes the synthesis of GMP from XMP. This chain is GMP synthase [glutamine-hydrolyzing] subunit B, found in Methanocella arvoryzae (strain DSM 22066 / NBRC 105507 / MRE50).